A 558-amino-acid polypeptide reads, in one-letter code: Serine palmitoyltransferase 1 (558 aa).

Residues methionine 1 to serine 49 are Lumenal-facing. A helical transmembrane segment spans residues histidine 50–glutamine 84. Residues lysine 85–methionine 341 are Cytoplasmic-facing. The residue at position 121 (threonine 121) is a Phosphothreonine. The chain crosses the membrane as a helical span at residues aspartate 342 to methionine 371. Residues cysteine 372 to phenylalanine 424 are Lumenal-facing. A helical transmembrane segment spans residues alanine 425–lysine 457. The Cytoplasmic segment spans residues phenylalanine 458–lysine 558.

The protein belongs to the class-II pyridoxal-phosphate-dependent aminotransferase family. LCB1 and LCB2 encode essential subunits of the enzyme and form a heterodimer. Component of the SPOTS complex, at least composed of LCB1/2 (LCB1 and/or LCB2), ORM1/2 (ORM1 and/or ORM2), SAC1 and TSC3. Interacts with LCB2 and TSC3. Pyridoxal 5'-phosphate is required as a cofactor.

The protein localises to the cytoplasm. The protein resides in the endoplasmic reticulum membrane. The catalysed reaction is L-serine + hexadecanoyl-CoA + H(+) = 3-oxosphinganine + CO2 + CoA. The protein operates within lipid metabolism; sphingolipid metabolism. Component of serine palmitoyltransferase (SPT), which catalyzes the committed step in the synthesis of sphingolipids, the condensation of serine with palmitoyl CoA to form the long chain base 3-ketosphinganine. The polypeptide is Serine palmitoyltransferase 1 (LCB1) (Saccharomyces cerevisiae (strain ATCC 204508 / S288c) (Baker's yeast)).